The primary structure comprises 268 residues: Gene 65 protein (268 aa).

This is Gene 65 protein (65) from Mycobacterium (Mycobacteriophage L5).